The following is a 398-amino-acid chain: 8-amino-7-oxononanoate synthase (398 aa).

A substrate-binding site is contributed by Arg-23. A pyridoxal 5'-phosphate-binding site is contributed by 110–111; sequence GY. His-135 is a substrate binding site. 3 residues coordinate pyridoxal 5'-phosphate: Ser-181, His-209, and Thr-237. Residue Lys-240 is modified to N6-(pyridoxal phosphate)lysine. Thr-354 lines the substrate pocket.

Belongs to the class-II pyridoxal-phosphate-dependent aminotransferase family. BioF subfamily. In terms of assembly, homodimer. It depends on pyridoxal 5'-phosphate as a cofactor.

It carries out the reaction 6-carboxyhexanoyl-[ACP] + L-alanine + H(+) = (8S)-8-amino-7-oxononanoate + holo-[ACP] + CO2. It participates in cofactor biosynthesis; biotin biosynthesis. In terms of biological role, catalyzes the decarboxylative condensation of pimeloyl-[acyl-carrier protein] and L-alanine to produce 8-amino-7-oxononanoate (AON), [acyl-carrier protein], and carbon dioxide. The protein is 8-amino-7-oxononanoate synthase of Anaeromyxobacter sp. (strain K).